Consider the following 374-residue polypeptide: tRNA-specific 2-thiouridylase MnmA (374 aa).

ATP contacts are provided by residues 17 to 24 and methionine 43; that span reads GMSGGVDS. The interval 103–105 is interaction with target base in tRNA; it reads NPD. Cysteine 108 functions as the Nucleophile in the catalytic mechanism. Cysteine 108 and cysteine 204 are joined by a disulfide. Glycine 132 is a binding site for ATP. Residues 154 to 156 form an interaction with tRNA region; that stretch reads KDQ. Cysteine 204 serves as the catalytic Cysteine persulfide intermediate. The segment at 316-317 is interaction with tRNA; it reads RY.

It belongs to the MnmA/TRMU family.

It is found in the cytoplasm. It catalyses the reaction S-sulfanyl-L-cysteinyl-[protein] + uridine(34) in tRNA + AH2 + ATP = 2-thiouridine(34) in tRNA + L-cysteinyl-[protein] + A + AMP + diphosphate + H(+). Its function is as follows. Catalyzes the 2-thiolation of uridine at the wobble position (U34) of tRNA, leading to the formation of s(2)U34. The protein is tRNA-specific 2-thiouridylase MnmA of Pseudomonas fluorescens (strain SBW25).